Consider the following 226-residue polypeptide: LysM and putative peptidoglycan-binding domain-containing protein 1 (226 aa).

Phosphoserine occurs at positions 23 and 33. The region spanning 40-84 (LEHQLEPGDTLAGLALKYGVTMEQIKRTNRLYTNDSIFLKKTLYI) is the LysM domain. A disordered region spans residues 95 to 156 (NGLDSEEEND…PSHDLSASDF (62 aa)). A compositionally biased stretch (acidic residues) spans 98–107 (DSEEENDGEE). Serine 99 carries the phosphoserine modification. The segment covering 142–151 (QETSTPSHDL) has biased composition (polar residues). A phosphoserine mark is found at serine 165, serine 180, serine 193, and serine 211. The tract at residues 170–226 (AAAQKLRKGESGVPEEDTGLYPSSPRMQQRAVLGPVPLTRTSRTQTLRDQEDEIFKL) is disordered. The span at 215-226 (TLRDQEDEIFKL) shows a compositional bias: basic and acidic residues.

This chain is LysM and putative peptidoglycan-binding domain-containing protein 1 (Lysmd1), found in Mus musculus (Mouse).